Reading from the N-terminus, the 577-residue chain is Proton channel OTOP3 (577 aa).

Residues Met-1–Gln-46 form a disordered region. At Met-1–Gln-69 the chain is on the cytoplasmic side. The chain crosses the membrane as a helical span at residues Leu-70–Met-90. The Extracellular segment spans residues Ile-91–Gly-100. Residues Asp-101–Thr-124 form a helical membrane-spanning segment. At Thr-125–Pro-140 the chain is on the cytoplasmic side. A helical transmembrane segment spans residues Ile-141 to Met-162. At Gly-163–Glu-174 the chain is on the extracellular side. Residues Val-175–Cys-198 form a helical membrane-spanning segment. The Cytoplasmic portion of the chain corresponds to Lys-199 to Thr-206. The chain crosses the membrane as a helical span at residues Asn-207–Thr-229. The Extracellular portion of the chain corresponds to Asn-230 to Pro-276. Residues Phe-277 to Trp-293 traverse the membrane as a helical segment. Topologically, residues Lys-294 to Ile-319 are cytoplasmic. Residues Phe-320–Phe-339 traverse the membrane as a helical segment. Residues Gln-340 to Phe-353 are Extracellular-facing. The chain crosses the membrane as a helical span at residues Thr-354–Ala-376. At Ile-377 to Ser-394 the chain is on the cytoplasmic side. Residues Leu-395–Val-416 traverse the membrane as a helical segment. Residues Ala-417–Leu-427 are Extracellular-facing. A helical transmembrane segment spans residues Asn-428 to Ile-450. At Glu-451–Glu-510 the chain is on the cytoplasmic side. Residues Ile-511–Phe-528 traverse the membrane as a helical segment. At Gly-529–Thr-547 the chain is on the extracellular side. A helical transmembrane segment spans residues Trp-548–Leu-570. Residues Val-571–Ala-577 are Cytoplasmic-facing.

Belongs to the otopetrin family. Homodimer. As to expression, expressed in epidermis, small intestine, stomach and retina.

Its subcellular location is the cell membrane. It catalyses the reaction H(+)(in) = H(+)(out). With respect to regulation, activated by extracellular acidification. Activated by Zn(2+) under non-acidic conditions. In terms of biological role, proton-selective channel gated by extracellular protons. The chain is Proton channel OTOP3 from Mus musculus (Mouse).